Here is a 1845-residue protein sequence, read N- to C-terminus: Proteasome activator complex subunit 4 (1845 aa).

The segment covering 1-13 has biased composition (basic and acidic residues); that stretch reads MEPAERAGGRDPL. Residues 1–26 are disordered; that stretch reads MEPAERAGGRDPLEPGGRPGPDPQGF. HEAT repeat units follow at residues 475–519 and 1000–1039; these read PEGP…LVDC and NFCC…NHSG. Ser1123 carries the post-translational modification Phosphoserine. HEAT repeat units lie at residues 1181–1219 and 1356–1394; these read RVLP…QLKR and DAFL…GSKH. Phosphoserine is present on Ser1616. 2 HEAT repeats span residues 1638–1676 and 1682–1720; these read PHQV…YNLF and EDAV…CNFL. A bromodomain-like (BRDL) region spans residues 1652-1740; sequence ARSSSWHARY…EQLCKTKLPK (89 aa).

Belongs to the BLM10 family. In terms of assembly, homodimer. Component of the spermatoproteasome, a form of the proteasome specifically found in testis. Interacts with the 20S and 26S proteasomes. Post-translationally, phosphorylated.

The protein localises to the cytoplasm. It is found in the cytosol. Its subcellular location is the nucleus. It localises to the nucleus speckle. Functionally, associated component of the proteasome that specifically recognizes acetylated histones and promotes ATP- and ubiquitin-independent degradation of core histones during spermatogenesis and DNA damage response. Recognizes and binds acetylated histones via its bromodomain-like (BRDL) region and activates the proteasome by opening the gated channel for substrate entry. Binds to the core proteasome via its C-terminus, which occupies the same binding sites as the proteasomal ATPases, opening the closed structure of the proteasome via an active gating mechanism. Component of the spermatoproteasome, a form of the proteasome specifically found in testis: binds to acetylated histones and promotes degradation of histones, thereby participating actively to the exchange of histones during spermatogenesis. Also involved in DNA damage response in somatic cells, by promoting degradation of histones following DNA double-strand breaks. This Bos taurus (Bovine) protein is Proteasome activator complex subunit 4 (PSME4).